The sequence spans 372 residues: NAD(P)H-quinone oxidoreductase subunit 1 (372 aa).

9 consecutive transmembrane segments (helical) span residues 27 to 47 (TIWLPIPMLLMIIGATVGVLV), 65 to 85 (PEYIGPLGILAPVADGIKLVF), 97 to 117 (WLFTLGPILVVIPVFFSYLIV), 128 to 148 (LGIGIFFWIALSSIAPIGLLM), 176 to 196 (LALAVLAVVMMSNSLSTIDIV), 204 to 224 (ILGWNVIRQPIGFMLFWIAAL), 249 to 269 (YAGMKFALFYLGSYVNLVLSS), 308 to 328 (GLGLVMTLLKAYFFLFLAILL), and 351 to 371 (VGLVNLLLTAGLKLAFPFAFG).

This sequence belongs to the complex I subunit 1 family. As to quaternary structure, NDH-1 is composed of at least 11 different subunits.

It localises to the cellular thylakoid membrane. It catalyses the reaction a plastoquinone + NADH + (n+1) H(+)(in) = a plastoquinol + NAD(+) + n H(+)(out). The catalysed reaction is a plastoquinone + NADPH + (n+1) H(+)(in) = a plastoquinol + NADP(+) + n H(+)(out). NDH-1 shuttles electrons from an unknown electron donor, via FMN and iron-sulfur (Fe-S) centers, to quinones in the respiratory and/or the photosynthetic chain. The immediate electron acceptor for the enzyme in this species is believed to be plastoquinone. Couples the redox reaction to proton translocation, and thus conserves the redox energy in a proton gradient. This is NAD(P)H-quinone oxidoreductase subunit 1 from Acaryochloris marina (strain MBIC 11017).